The following is a 146-amino-acid chain: Hemoglobin subunit beta (146 aa).

V1 carries the N-acetylvaline modification. In terms of domain architecture, Globin spans 2–146 (HLTPEEKTAV…VANALAHKYH (145 aa)). Residue T12 is modified to Phosphothreonine. S44 carries the phosphoserine modification. K59 carries the post-translational modification N6-acetyllysine. Heme b is bound at residue H63. N6-acetyllysine is present on K82. H92 is a binding site for heme b. C93 carries the S-nitrosocysteine modification. The residue at position 144 (K144) is an N6-acetyllysine.

It belongs to the globin family. Heterotetramer of two alpha chains and two beta chains. In terms of tissue distribution, red blood cells.

Involved in oxygen transport from the lung to the various peripheral tissues. The protein is Hemoglobin subunit beta (HBB) of Mandrillus sphinx (Mandrill).